The sequence spans 593 residues: Epidermal growth factor receptor kinase substrate 8-like protein 3 (593 aa).

The PTB domain occupies 28–155; that stretch reads QHRVEHLMTC…ALEEELEQRP (128 aa). Disordered stretches follow at residues 149 to 171, 184 to 239, and 374 to 451; these read EELE…RGPA, LEPG…ERDE, and ADWT…PAQP. Ser-231 is modified (phosphoserine). Residues 386-401 show a composition bias toward polar residues; sequence PTFSDDWQLPEPSSQA. Residues 425-435 show a composition bias toward basic and acidic residues; it reads PQEKTHNHDPQ. An SH3 domain is found at 450-509; the sequence is QPALKMQVLYEFEARNPRELTVVQGEKLEVLDHSKRWWLVKNEAGRSGYIPSNILEPLQP.

This sequence belongs to the EPS8 family. As to quaternary structure, interacts with ABI1. Part of a complex that contains SOS1, ABI1 and EPS8L2. Interacts with FASLG.

The protein localises to the cytoplasm. This is Epidermal growth factor receptor kinase substrate 8-like protein 3 (EPS8L3) from Homo sapiens (Human).